Here is a 110-residue protein sequence, read N- to C-terminus: Class I hydrophobin 2 (110 aa).

Residues 1 to 17 form the signal peptide; that stretch reads MQFKFLTTVALATLAVA. 4 disulfide bridges follow: Cys-28-Cys-89, Cys-36-Cys-83, Cys-37-Cys-71, and Cys-90-Cys-103. The N-linked (GlcNAc...) asparagine glycan is linked to Asn-57.

This sequence belongs to the fungal hydrophobin family. Self-assembles to form functional amyloid fibrils called rodlets. Self-assembly into fibrillar rodlets occurs spontaneously at hydrophobic:hydrophilic interfaces and the rodlets further associate laterally to form amphipathic monolayers.

Its subcellular location is the secreted. The protein resides in the cell wall. Aerial growth, conidiation, and dispersal of filamentous fungi in the environment rely upon a capability of their secreting small amphipathic proteins called hydrophobins (HPBs) with low sequence identity. Class I can self-assemble into an outermost layer of rodlet bundles on aerial cell surfaces, conferring cellular hydrophobicity that supports fungal growth, development and dispersal; whereas Class II form highly ordered films at water-air interfaces through intermolecular interactions but contribute nothing to the rodlet structure. CoH2 is an asexual monokaryon-specific class I hydrophobin that is involved in aerial growth of mycelia. The sequence is that of Class I hydrophobin 2 from Coprinopsis cinerea (Inky cap fungus).